A 152-amino-acid chain; its full sequence is MHQVIQLKILDSRIGDTIPLPAYATDGSAGLDLRVCISEPMQVAPQQTVLLPTGIAIYIADPKLAAVILPRSGLGHKNGIVLGNLVGLIDSDYQGELKISCWNRSQEHFTVNPGDRIAQLVFIPVVQTSFEVVNEFTESSRGEGGFGSSGRY.

Substrate contacts are provided by residues 71 to 73, Asn-84, 88 to 90, and Lys-98; these read RSG and LID.

It belongs to the dUTPase family. Mg(2+) serves as cofactor.

The enzyme catalyses dUTP + H2O = dUMP + diphosphate + H(+). It participates in pyrimidine metabolism; dUMP biosynthesis; dUMP from dCTP (dUTP route): step 2/2. In terms of biological role, this enzyme is involved in nucleotide metabolism: it produces dUMP, the immediate precursor of thymidine nucleotides and it decreases the intracellular concentration of dUTP so that uracil cannot be incorporated into DNA. The sequence is that of Deoxyuridine 5'-triphosphate nucleotidohydrolase from Legionella pneumophila (strain Paris).